We begin with the raw amino-acid sequence, 251 residues long: Auxin-responsive protein IAA29 (251 aa).

Residues 3-7 carry the EAR-like (transcriptional repression) motif; that stretch reads LDLGL. The PB1 domain occupies 159-246; the sequence is SMYVKVKMDG…SIIRDRPCAY (88 aa).

It belongs to the Aux/IAA family. In terms of assembly, homodimers and heterodimers.

It localises to the nucleus. Functionally, aux/IAA proteins are short-lived transcriptional factors that function as repressors of early auxin response genes at low auxin concentrations. Repression is thought to result from the interaction with auxin response factors (ARFs), proteins that bind to the auxin-responsive promoter element (AuxRE). Formation of heterodimers with ARF proteins may alter their ability to modulate early auxin response genes expression. The chain is Auxin-responsive protein IAA29 (IAA29) from Arabidopsis thaliana (Mouse-ear cress).